A 546-amino-acid chain; its full sequence is Hexose transporter HXT10 (546 aa).

At 1-44 (MVSSSVSILGTSAKASTSLSRKDEIKLTPETREASLDIPYKPII) the chain is on the cytoplasmic side. The helical transmembrane segment at 45–65 (AYWTVMGLCLMIAFGGFIFGW) threads the bilayer. Topologically, residues 66–100 (DTGTISGFINQTDFKRRFGELQRDGSFQLSDVRTG) are extracellular. The N-linked (GlcNAc...) asparagine glycan is linked to N75. A helical membrane pass occupies residues 101 to 121 (LIVGIFNIGCALGGLTLGRLG). Over 122 to 127 (DIYGRK) the chain is Cytoplasmic. The chain crosses the membrane as a helical span at residues 128–148 (IGLMCVILVYVVGIVIQIASS). Topologically, residues 149–158 (DKWYQYFIGR) are extracellular. A helical membrane pass occupies residues 159–179 (IVSGMGVGGVAVLSPTLISEI). Residues 180–185 (SPKHLR) lie on the Cytoplasmic side of the membrane. The chain crosses the membrane as a helical span at residues 186–206 (GTCVSFYQLMITLGIFLGYCT). At 207–220 (NYGTKKYSNSIQWR) the chain is on the extracellular side. Residues 221-241 (VPLGLCFAWAIFMVIGMVMVP) traverse the membrane as a helical segment. At 242–324 (ESPRYLVEKG…IQSLQQLTGC (83 aa)) the chain is on the cytoplasmic side. Residues 325-341 (NYFFYYGTTIFNAVGMQ) form a helical membrane-spanning segment. Over 342–347 (DSFETS) the chain is Extracellular. The helical transmembrane segment at 348 to 365 (IVLGAVNFASTFVALYIV) threads the bilayer. Residues 366–372 (DKFGRRK) lie on the Cytoplasmic side of the membrane. A helical transmembrane segment spans residues 373-393 (CLLWGSASMAICFVIFATVGV). Topologically, residues 394–415 (TRLWPQGKDQPSSQSAGNVMIV) are extracellular. The helical transmembrane segment at 416–436 (FTCFFIFSFAITWAPIAYVIV) threads the bilayer. The Cytoplasmic segment spans residues 437 to 453 (AETYPLRVKNRAMAIAV). Residues 454–474 (GANWMWGFLIGFFTPFITRSI) form a helical membrane-spanning segment. Position 475 (G475) is a topological domain, extracellular. The chain crosses the membrane as a helical span at residues 476–496 (FSYGYVFMGCLIFSYFYVFFF). The Cytoplasmic portion of the chain corresponds to 497–546 (VCETKGLTLEEVNEMYEERIKPWKSGGWIPSSRRTPQPTSSTPLVIVDSK).

It belongs to the major facilitator superfamily. Sugar transporter (TC 2.A.1.1) family.

Its subcellular location is the membrane. Functionally, probable glucose transporter. The chain is Hexose transporter HXT10 (HXT10) from Saccharomyces cerevisiae (strain ATCC 204508 / S288c) (Baker's yeast).